Reading from the N-terminus, the 583-residue chain is Undecaprenyl phosphate-alpha-4-amino-4-deoxy-L-arabinose arabinosyl transferase 2 (583 aa).

Positions Met1 to Ala20 are disordered. Transmembrane regions (helical) follow at residues Leu42 to Ile62, Leu113 to Thr135, Ser145 to Ser165, Asn166 to Leu186, Phe209 to Ile229, Gly241 to Ala261, Trp290 to Gly310, Gln321 to Ser341, Leu345 to Ile365, Ser380 to Thr400, Met409 to Pro429, and Pro440 to Val460.

Belongs to the glycosyltransferase 83 family.

The protein resides in the cell inner membrane. The catalysed reaction is 4-amino-4-deoxy-alpha-L-arabinopyranosyl di-trans,octa-cis-undecaprenyl phosphate + lipid IVA = lipid IIA + di-trans,octa-cis-undecaprenyl phosphate.. It functions in the pathway lipopolysaccharide metabolism; 4-amino-4-deoxy-beta-L-arabinose-lipid A biosynthesis. Its function is as follows. Catalyzes the transfer of the L-Ara4N moiety of the glycolipid undecaprenyl phosphate-alpha-L-Ara4N to lipid A. The modified arabinose is attached to lipid A and is required for resistance to polymyxin and cationic antimicrobial peptides. The sequence is that of Undecaprenyl phosphate-alpha-4-amino-4-deoxy-L-arabinose arabinosyl transferase 2 from Pseudomonas fluorescens (strain ATCC BAA-477 / NRRL B-23932 / Pf-5).